Reading from the N-terminus, the 92-residue chain is Muconolactone Delta-isomerase (92 aa).

Belongs to the muconolactone Delta-isomerase family. Homodecamer.

The catalysed reaction is (S)-muconolactone = (4,5-dihydro-5-oxofuran-2-yl)-acetate. It functions in the pathway aromatic compound metabolism; beta-ketoadipate pathway; 5-oxo-4,5-dihydro-2-furylacetate from catechol: step 3/3. In Cupriavidus pinatubonensis (strain JMP 134 / LMG 1197) (Cupriavidus necator (strain JMP 134)), this protein is Muconolactone Delta-isomerase (catC).